A 318-amino-acid chain; its full sequence is NADH-ubiquinone oxidoreductase chain 1 (318 aa).

A run of 8 helical transmembrane segments spans residues 3–23 (FINI…LTLV), 70–90 (LFII…IPLP), 100–120 (LGML…LWSG), 146–166 (MAII…QMLI), 171–191 (HIWL…STLA), 231–251 (IILM…HINY), 254–273 (LYST…FLWI), and 294–314 (LPLT…LAGI).

It belongs to the complex I subunit 1 family. As to quaternary structure, core subunit of respiratory chain NADH dehydrogenase (Complex I) which is composed of 45 different subunits.

It localises to the mitochondrion inner membrane. It catalyses the reaction a ubiquinone + NADH + 5 H(+)(in) = a ubiquinol + NAD(+) + 4 H(+)(out). Functionally, core subunit of the mitochondrial membrane respiratory chain NADH dehydrogenase (Complex I) which catalyzes electron transfer from NADH through the respiratory chain, using ubiquinone as an electron acceptor. Essential for the catalytic activity and assembly of complex I. The chain is NADH-ubiquinone oxidoreductase chain 1 from Rattus norvegicus (Rat).